Here is a 398-residue protein sequence, read N- to C-terminus: Na(+)/H(+) antiporter NhaA 2 (398 aa).

11 helical membrane passes run 17 to 37 (ILLM…LAGL), 59 to 79 (LLLW…GLEV), 95 to 115 (SLPT…YLGF), 125 to 145 (GWAI…ALLG), 154 to 174 (VFLL…IALF), 179 to 199 (LSIT…ILNL), 213 to 233 (LLLW…GVVI), 262 to 282 (FMIL…GMSL), 288 to 308 (PAAL…VLLF), 331 to 351 (AVAV…SLAF), and 364 to 384 (LGTL…LTKV).

This sequence belongs to the NhaA Na(+)/H(+) (TC 2.A.33) antiporter family.

It localises to the cell inner membrane. The enzyme catalyses Na(+)(in) + 2 H(+)(out) = Na(+)(out) + 2 H(+)(in). Na(+)/H(+) antiporter that extrudes sodium in exchange for external protons. In Shewanella denitrificans (strain OS217 / ATCC BAA-1090 / DSM 15013), this protein is Na(+)/H(+) antiporter NhaA 2.